The sequence spans 1111 residues: Protein STU1 (1111 aa).

2 HEAT repeats span residues 95–133 (ALPLIVEKLGDQKEKFRQLASQALATLYKVAPVEVERSV) and 167–205 (YVPTMMELLEDADGMVRDVAKSTVIELFRNAPGPAKSDL). 2 disordered regions span residues 225–245 (ELNPTSSAPASQPDPESVEPS) and 476–751 (RLLQ…VDEE). Residues 502–511 (SKSTMGTSKP) are compositionally biased toward polar residues. Over residues 704–714 (PREEQRFVKPV) the composition is skewed to basic and acidic residues.

This sequence belongs to the CLASP family. In terms of assembly, interacts with microtubules.

It is found in the cytoplasm. It localises to the cytoskeleton. Its subcellular location is the nucleus. The protein localises to the spindle. In terms of biological role, microtubule binding protein that promotes the stabilization of dynamic microtubules. Required for mitotic spindle formation. The sequence is that of Protein STU1 (STU1) from Chaetomium globosum (strain ATCC 6205 / CBS 148.51 / DSM 1962 / NBRC 6347 / NRRL 1970) (Soil fungus).